Here is a 513-residue protein sequence, read N- to C-terminus: Ankyrin repeat-containing protein YIL001W (513 aa).

ANK repeat units lie at residues 8-37 (KNFE…NVNS) and 41-70 (FDNS…VCDR). BTB domains are found at residues 122–179 (RDIT…KFLY) and 274–360 (PDVQ…DIPW).

The polypeptide is Ankyrin repeat-containing protein YIL001W (Saccharomyces cerevisiae (strain ATCC 204508 / S288c) (Baker's yeast)).